Reading from the N-terminus, the 350-residue chain is Adenine DNA glycosylase (350 aa).

The active-site Proton donor/acceptor is E37. Residues C192, C199, C202, and C208 each coordinate [4Fe-4S] cluster.

Belongs to the Nth/MutY family. As to quaternary structure, monomer. [4Fe-4S] cluster serves as cofactor.

It carries out the reaction Hydrolyzes free adenine bases from 7,8-dihydro-8-oxoguanine:adenine mismatched double-stranded DNA, leaving an apurinic site.. Its function is as follows. Adenine glycosylase active on G-A mispairs. MutY also corrects error-prone DNA synthesis past GO lesions which are due to the oxidatively damaged form of guanine: 7,8-dihydro-8-oxoguanine (8-oxo-dGTP). The polypeptide is Adenine DNA glycosylase (mutY) (Escherichia coli (strain K12)).